The sequence spans 314 residues: tRNA dimethylallyltransferase (314 aa).

An ATP-binding site is contributed by 12-19 (GPTAGGKS). 14–19 (TAGGKS) serves as a coordination point for substrate. The tract at residues 37–40 (DSMQ) is interaction with substrate tRNA.

This sequence belongs to the IPP transferase family. Monomer. Mg(2+) is required as a cofactor.

It catalyses the reaction adenosine(37) in tRNA + dimethylallyl diphosphate = N(6)-dimethylallyladenosine(37) in tRNA + diphosphate. Catalyzes the transfer of a dimethylallyl group onto the adenine at position 37 in tRNAs that read codons beginning with uridine, leading to the formation of N6-(dimethylallyl)adenosine (i(6)A). The polypeptide is tRNA dimethylallyltransferase (Rhodospirillum centenum (strain ATCC 51521 / SW)).